The sequence spans 336 residues: DNA-directed RNA polymerase subunit alpha (336 aa).

The interval 1-232 (MIQKNWQELI…DQLGVFVNFD (232 aa)) is alpha N-terminal domain (alpha-NTD). The segment at 248-336 (FNPALLKKVD…DLAKRYEDQY (89 aa)) is alpha C-terminal domain (alpha-CTD).

This sequence belongs to the RNA polymerase alpha chain family. In terms of assembly, homodimer. The RNAP catalytic core consists of 2 alpha, 1 beta, 1 beta' and 1 omega subunit. When a sigma factor is associated with the core the holoenzyme is formed, which can initiate transcription.

It catalyses the reaction RNA(n) + a ribonucleoside 5'-triphosphate = RNA(n+1) + diphosphate. Functionally, DNA-dependent RNA polymerase catalyzes the transcription of DNA into RNA using the four ribonucleoside triphosphates as substrates. The chain is DNA-directed RNA polymerase subunit alpha from Rhizobium rhizogenes (strain K84 / ATCC BAA-868) (Agrobacterium radiobacter).